The primary structure comprises 61 residues: Small ribosomal subunit protein uS14 (61 aa).

Zn(2+) is bound by residues cysteine 24, cysteine 27, cysteine 40, and cysteine 43.

The protein belongs to the universal ribosomal protein uS14 family. Zinc-binding uS14 subfamily. As to quaternary structure, part of the 30S ribosomal subunit. Contacts proteins S3 and S10. It depends on Zn(2+) as a cofactor.

In terms of biological role, binds 16S rRNA, required for the assembly of 30S particles and may also be responsible for determining the conformation of the 16S rRNA at the A site. This is Small ribosomal subunit protein uS14 from Malacoplasma penetrans (strain HF-2) (Mycoplasma penetrans).